The primary structure comprises 102 residues: Circadian clock oscillator protein KaiB (102 aa).

It belongs to the KaiB family. As to quaternary structure, undergoes a major conformational rearrangment; in the free state forms homotetramers with 2 dimers. When bound to the CI domain of KaiC switches to a monomeric thioredoxin-fold (KaiB(fs)). Monomers, homodimers and homotetramers are detected in solution; at low concentrations only monomers are seen. In vitro forms KaiC(6):KaiB(1) and KaiC(6):KaiB(6) complexes. Only associates with 'Ser-431'-phosphorylated KaiC (and not with doubly phosphorylated KaiC). Complex formation between KaiB and KaiC is regulated by the phosphorylation state of KaiC and by an ATP hydrolysis-driven conformation change in the CI ring of KaiC; complex formation is slow. Slow complex formation is crucial for the timing of the circadian period. In low resolution cryo-EM forms a KaiC(6):KaiB(6) complex. The KaiABC complex composition changes during the circadian cycle to control KaiC phosphorylation. Complexes KaiC(6), KaiA(2-4):KaiC(6), KaiB(6):KaiC(6) and KaiC(6):KaiB(6):KaiA(12) are among the most important forms, many form cooperatively. The KaiB:KaiC complex is more prevalent at 16 hours (in the dark) than at 4 hours (in the light) in the circadian cycle. The KaiA:KaiB complex is only found at 20-24 hours in the circadian cycle (subjective night). Binds to the CI domain of KaiC; SasA and KaiB compete to bind to the CI domain.

The protein localises to the cytoplasm. The protein resides in the cell membrane. Functionally, key component of the KaiABC oscillator complex, which constitutes the main circadian regulator in cyanobacteria. Complex composition changes during the circadian cycle to control KaiC phosphorylation. KaiA stimulates KaiC autophosphorylation, while KaiB sequesters KaiA, leading to KaiC autodephosphorylation. KaiA binding to the KaiC CII domain yields KaiA(2-4):KaiC(6) complexes which stimulate KaiC autophosphorylation. Phospho-Ser-431 KaiC accumulation triggers binding of KaiB to form the KaiB(6):KaiC(6) complex, leading to changes in the output regulators CikA and SasA. KaiB switches to a thioredoxin-like fold (KaiB(fs)) in complex with KaiC. KaiB(6):KaiC(6) formation exposes a site for KaiA binding that sequesters KaiA from the CII domain, making the KaiC(6):KaiB(6):KaiA(12) complex that results in KaiC autodephosphorylation. Complete dephosphorylation of KaiC leads to dissociation of KaiA(2):KaiB(1), completing 1 cycle of the Kai oscillator. Its function is as follows. Circadian oscillations can be generated in vitro by incubating KaiA, KaiB and KaiC with 1 mM ATP. The cycle is self-sustainable for at least 3 cycles and resistant to temperature changes. A very robust clock is reconstituted with KaiA, KaiB, KaiC, SasA, CikA and RpaA; output is measured by transcription from an appropriate reporter. In terms of biological role, a metamorphic protein which reversibly switches between an inactive tetrameric fold and a rare, thioredoxin-like monomeric fold (KaiB(fs)). KaiB(fs) binds phospho-KaiC, KaiA and CikA. KaiA and CikA compete for binding to KaiB(fs), and KaiB(fs) and SasA compete for binding to KaiC, thus the clock oscillator and output signal pathway are tightly coupled. This chain is Circadian clock oscillator protein KaiB, found in Synechococcus elongatus (strain ATCC 33912 / PCC 7942 / FACHB-805) (Anacystis nidulans R2).